The sequence spans 325 residues: Phosphate acyltransferase (325 aa).

The protein belongs to the PlsX family. As to quaternary structure, homodimer. Probably interacts with PlsY.

The protein localises to the cytoplasm. The catalysed reaction is a fatty acyl-[ACP] + phosphate = an acyl phosphate + holo-[ACP]. The protein operates within lipid metabolism; phospholipid metabolism. Catalyzes the reversible formation of acyl-phosphate (acyl-PO(4)) from acyl-[acyl-carrier-protein] (acyl-ACP). This enzyme utilizes acyl-ACP as fatty acyl donor, but not acyl-CoA. The polypeptide is Phosphate acyltransferase (Staphylococcus epidermidis (strain ATCC 12228 / FDA PCI 1200)).